Here is a 137-residue protein sequence, read N- to C-terminus: MTQRSLVLLKPDAVRRGLTGEIISRIERKAGWQITALELRTLDTETLEQHYGEHKGKPFYEPLVEFMASGPVVAMVVEGERVIEGVRALAGPTDPIAAAPGSIRGDYGVIVRENLIHASDSEESAERELKIFFPGRV.

Residues K10, F59, R87, T93, R104, and N114 each coordinate ATP. H117 serves as the catalytic Pros-phosphohistidine intermediate.

This sequence belongs to the NDK family. Homotetramer. Mg(2+) serves as cofactor.

It localises to the cytoplasm. The catalysed reaction is a 2'-deoxyribonucleoside 5'-diphosphate + ATP = a 2'-deoxyribonucleoside 5'-triphosphate + ADP. It carries out the reaction a ribonucleoside 5'-diphosphate + ATP = a ribonucleoside 5'-triphosphate + ADP. Functionally, major role in the synthesis of nucleoside triphosphates other than ATP. The ATP gamma phosphate is transferred to the NDP beta phosphate via a ping-pong mechanism, using a phosphorylated active-site intermediate. The polypeptide is Nucleoside diphosphate kinase (Streptomyces coelicolor (strain ATCC BAA-471 / A3(2) / M145)).